Here is a 361-residue protein sequence, read N- to C-terminus: Peptide chain release factor 1 (361 aa).

Glutamine 235 carries the post-translational modification N5-methylglutamine. The interval 286–305 (IDSARSAERKQKVGSGDRSE) is disordered.

The protein belongs to the prokaryotic/mitochondrial release factor family. Methylated by PrmC. Methylation increases the termination efficiency of RF1.

Its subcellular location is the cytoplasm. Functionally, peptide chain release factor 1 directs the termination of translation in response to the peptide chain termination codons UAG and UAA. This Rhodopseudomonas palustris (strain HaA2) protein is Peptide chain release factor 1.